A 752-amino-acid polypeptide reads, in one-letter code: Protein ORF24 (752 aa).

It belongs to the herpesviridae UL87 family. In terms of assembly, interacts with ORF34.

Its function is as follows. Plays a role in the expression of late viral mRNAs together with ORF34. This chain is Protein ORF24 (ORF24), found in Homo sapiens (Human).